Consider the following 534-residue polypeptide: Bifunctional purine biosynthesis protein PurH (534 aa).

Residues M1 to V148 form the MGS-like domain.

The protein belongs to the PurH family.

The catalysed reaction is (6R)-10-formyltetrahydrofolate + 5-amino-1-(5-phospho-beta-D-ribosyl)imidazole-4-carboxamide = 5-formamido-1-(5-phospho-D-ribosyl)imidazole-4-carboxamide + (6S)-5,6,7,8-tetrahydrofolate. The enzyme catalyses IMP + H2O = 5-formamido-1-(5-phospho-D-ribosyl)imidazole-4-carboxamide. Its pathway is purine metabolism; IMP biosynthesis via de novo pathway; 5-formamido-1-(5-phospho-D-ribosyl)imidazole-4-carboxamide from 5-amino-1-(5-phospho-D-ribosyl)imidazole-4-carboxamide (10-formyl THF route): step 1/1. It functions in the pathway purine metabolism; IMP biosynthesis via de novo pathway; IMP from 5-formamido-1-(5-phospho-D-ribosyl)imidazole-4-carboxamide: step 1/1. This Shewanella denitrificans (strain OS217 / ATCC BAA-1090 / DSM 15013) protein is Bifunctional purine biosynthesis protein PurH.